Here is a 476-residue protein sequence, read N- to C-terminus: Glucose-1-phosphate adenylyltransferase (476 aa).

Alpha-D-glucose 1-phosphate-binding positions include Y114, G179, 194 to 195 (EK), and S212.

This sequence belongs to the bacterial/plant glucose-1-phosphate adenylyltransferase family. In terms of assembly, homotetramer.

The catalysed reaction is alpha-D-glucose 1-phosphate + ATP + H(+) = ADP-alpha-D-glucose + diphosphate. It functions in the pathway glycan biosynthesis; glycogen biosynthesis. Its function is as follows. Involved in the biosynthesis of ADP-glucose, a building block required for the elongation reactions to produce glycogen. Catalyzes the reaction between ATP and alpha-D-glucose 1-phosphate (G1P) to produce pyrophosphate and ADP-Glc. In Yersinia pestis, this protein is Glucose-1-phosphate adenylyltransferase.